A 308-amino-acid chain; its full sequence is Acetylglutamate kinase (308 aa).

Substrate-binding positions include 67–68 (GG), Arg-89, and Asn-193.

The protein belongs to the acetylglutamate kinase family. ArgB subfamily.

Its subcellular location is the cytoplasm. The catalysed reaction is N-acetyl-L-glutamate + ATP = N-acetyl-L-glutamyl 5-phosphate + ADP. It functions in the pathway amino-acid biosynthesis; L-arginine biosynthesis; N(2)-acetyl-L-ornithine from L-glutamate: step 2/4. Functionally, catalyzes the ATP-dependent phosphorylation of N-acetyl-L-glutamate. This Nitratidesulfovibrio vulgaris (strain DP4) (Desulfovibrio vulgaris) protein is Acetylglutamate kinase.